The chain runs to 70 residues: Brevinin-1PLb (70 aa).

Positions 1 to 22 (MFTTKKSMLLLFFLGTINLSLC) are cleaved as a signal peptide. Residues 23–44 (EEERNAEEERRDEPDEMNVEVE) constitute a propeptide that is removed on maturation. Cys-64 and Cys-70 form a disulfide bridge.

Expressed by the skin glands.

Its subcellular location is the secreted. In terms of biological role, antimicrobial activity against the Gram-negative bacterium E.coli, the Gram-positive bacterium S.aureus and the yeast C.albicans. The chain is Brevinin-1PLb from Lithobates palustris (Pickerel frog).